The chain runs to 664 residues: Intraflagellar transport protein 70A1 (664 aa).

TPR repeat units follow at residues 11–44 (DGEFTAVVYRLIRDSRYSEAVQLLSAELQRSSRS), 45–78 (RAGLSLLAYCYYRLQEFELAAECYEQLSQMHPEL), 153–186 (PDGLVNMGCLLYKEGHYEAACSKFLAALQASGYQ), 188–220 (DLSYNLALAYYSSRQYAPALKHIADIIERGIRQ), 393–423 (TKQVQEARHNRDDEIIKKAMNEYDETLEKYI), 424–456 (PVLMAQAKIYWNLENYPMVEKIFRKSVEFCNDH), and 458–491 (VWKLNVAHVLFMQENKYKEAIGFYEPIVKKNYDN). The stretch at 507-534 (YIMTSQNEEAEELMRKIEKEEEQLSYGD) forms a coiled coil. A TPR 8 repeat occupies 543–576 (CIVNLVIGTLYCAKGNYDFGISRVIKSLEPYHKK).

The protein belongs to the TTC30/dfy-1/fleer family. In terms of assembly, interacts wit the IFT B complex component IFT52.

It localises to the cell projection. It is found in the cilium. Its function is as follows. Required for polyglutamylation of axonemal tubulin. Plays a role in anterograde intraflagellar transport (IFT), the process by which cilia precursors are transported from the base of the cilium to the site of their incorporation at the tip. The chain is Intraflagellar transport protein 70A1 (Ift70a1) from Mus musculus (Mouse).